A 177-amino-acid chain; its full sequence is MSEKKEIATFAGGCFWCMVKPFDEQPGIEKVVSGYTGGHTENPTYEEVCSETTGHREAVQITFQPDIYPYEKLVELFWQQIDPTDAGGQFADRGSSYRAAIYYHNDEQKQIAEASKKQLEESGIFKKPIVTDILKAEPFYEAEGYHQHFYKKNPDHYGRYRVGSGRQGFLDEHWRDR.

The active site involves cysteine 14.

Belongs to the MsrA Met sulfoxide reductase family.

The catalysed reaction is L-methionyl-[protein] + [thioredoxin]-disulfide + H2O = L-methionyl-(S)-S-oxide-[protein] + [thioredoxin]-dithiol. It carries out the reaction [thioredoxin]-disulfide + L-methionine + H2O = L-methionine (S)-S-oxide + [thioredoxin]-dithiol. Functionally, has an important function as a repair enzyme for proteins that have been inactivated by oxidation. Catalyzes the reversible oxidation-reduction of methionine sulfoxide in proteins to methionine. The chain is Peptide methionine sulfoxide reductase MsrA from Bacillus velezensis (strain DSM 23117 / BGSC 10A6 / LMG 26770 / FZB42) (Bacillus amyloliquefaciens subsp. plantarum).